The sequence spans 334 residues: Fe-S cluster assembly protein DRE2 (334 aa).

Positions 1–131 (MASTKTGLVL…ASIKAEPVAV (131 aa)) are N-terminal SAM-like domain. Residues 132-228 (PLRNHKKTTT…EDELVDENEM (97 aa)) are linker. The tract at residues 135-229 (NHKKTTTPGT…DELVDENEMR (95 aa)) is disordered. Residues 140 to 150 (TTPGTTTTAKK) are compositionally biased toward low complexity. 2 stretches are compositionally biased toward acidic residues: residues 182-192 (DSEDEDEESEG) and 215-227 (DSIE…DENE). Residues C238, C249, C252, and C254 each coordinate [2Fe-2S] cluster. The interval 238–254 (CGKSKTRRRKACKDCTC) is fe-S binding site A. [4Fe-4S] cluster contacts are provided by C297, C300, C308, and C311. 2 short sequence motifs (cx2C motif) span residues 297 to 300 (CGSC) and 308 to 311 (CSGC). The fe-S binding site B stretch occupies residues 297–311 (CGSCTLGDAFRCSGC).

This sequence belongs to the anamorsin family. In terms of assembly, monomer. Interacts with TAH18. Interacts with MIA40. Requires [2Fe-2S] cluster as cofactor. The cofactor is [4Fe-4S] cluster.

It localises to the cytoplasm. It is found in the mitochondrion intermembrane space. Its function is as follows. Component of the cytosolic iron-sulfur (Fe-S) protein assembly (CIA) machinery required for the maturation of extramitochondrial Fe-S proteins. Part of an electron transfer chain functioning in an early step of cytosolic Fe-S biogenesis, facilitating the de novo assembly of a [4Fe-4S] cluster on the scaffold complex CFD1-NBP35. Electrons are transferred to DRE2 from NADPH via the FAD- and FMN-containing protein TAH18. TAH18-DRE2 are also required for the assembly of the diferric tyrosyl radical cofactor of ribonucleotide reductase (RNR), probably by providing electrons for reduction during radical cofactor maturation in the catalytic small subunit RNR2. The protein is Fe-S cluster assembly protein DRE2 of Zygosaccharomyces rouxii (strain ATCC 2623 / CBS 732 / NBRC 1130 / NCYC 568 / NRRL Y-229).